The sequence spans 155 residues: Ribonuclease H (155 aa).

Residues 1–146 (MNALFAWTDG…ADELARAGMA (146 aa)) form the RNase H type-1 domain. Residues D9, E52, D74, and D138 each coordinate Mg(2+).

Belongs to the RNase H family. In terms of assembly, monomer. Requires Mg(2+) as cofactor.

The protein resides in the cytoplasm. It catalyses the reaction Endonucleolytic cleavage to 5'-phosphomonoester.. In terms of biological role, endonuclease that specifically degrades the RNA of RNA-DNA hybrids. The chain is Ribonuclease H from Paracoccus denitrificans (strain Pd 1222).